The chain runs to 235 residues: (5-formylfuran-3-yl)methyl phosphate synthase (235 aa).

Lys27 (schiff-base intermediate with substrate) is an active-site residue. Lys86 functions as the Proton acceptor in the catalytic mechanism.

Belongs to the MfnB family.

The catalysed reaction is 2 D-glyceraldehyde 3-phosphate = 4-(hydroxymethyl)-2-furancarboxaldehyde phosphate + phosphate + 2 H2O. It functions in the pathway cofactor biosynthesis; methanofuran biosynthesis. Functionally, catalyzes the formation of 4-(hydroxymethyl)-2-furancarboxaldehyde phosphate (4-HFC-P) from two molecules of glyceraldehyde-3-P (GA-3-P). In Archaeoglobus fulgidus (strain ATCC 49558 / DSM 4304 / JCM 9628 / NBRC 100126 / VC-16), this protein is (5-formylfuran-3-yl)methyl phosphate synthase.